A 291-amino-acid polypeptide reads, in one-letter code: MIPYPTVEDASVALGRNLTWFETVWFDYSATKSNFHVYCHTILVLFLVFSLAPFPLVIVEWTGWFDQFKIQKKVKYSLSDMFQCYKEVMKLFLLVVGTLQIVSYPSIQMVGIRSGLPLPSLMEIVAQLVVYFLIEDYTNYWIHRWMHCKWGYEKIHRIHHEYTSPIGYASPYAHWAEILILGIPTFLGPAIAPGHIMTFWLWISLRQFEAIETHSGYDFPWSVTKLIPFYGGPEYHDYHHYVGGQSQSNFASVFTYCDYIYGTDKGYRIHKKLLHHQIKEEAEEKRVRKHD.

3 consecutive transmembrane segments (helical) span residues 41-61, 92-112, and 114-134; these read TILVLFLVFSLAPFPLVIVEW, FLLVVGTLQIVSYPSIQMVGI, and SGLPLPSLMEIVAQLVVYFLI. Positions 128 to 263 constitute a Fatty acid hydroxylase domain; it reads LVVYFLIEDY…FTYCDYIYGT (136 aa). A Histidine box-1 motif is present at residues 143–147; sequence HRWMH. Residues 156–160 carry the Histidine box-2 motif; that stretch reads HRIHH. A helical transmembrane segment spans residues 178-198; that stretch reads ILILGIPTFLGPAIAPGHIMT. The Histidine box-3 motif lies at 235–241; sequence YHDYHHY.

It belongs to the sterol desaturase family. In terms of assembly, interacts with ACBP1. Fe cation serves as cofactor. In terms of tissue distribution, expressed at low levels in leaves, roots, siliques and flowers.

It is found in the endoplasmic reticulum membrane. It catalyses the reaction 4,4-dimethyl-5alpha-cholest-7-en-3beta-ol + 6 Fe(II)-[cytochrome b5] + 3 O2 + 5 H(+) = 4alpha-carboxy-4beta-methyl-5alpha-cholest-7-ene-3beta-ol + 6 Fe(III)-[cytochrome b5] + 4 H2O. The enzyme catalyses 24-methylidenelophenol + 6 Fe(II)-[cytochrome b5] + 3 O2 + 5 H(+) = 4alpha-carboxy-ergosta-7,24(24(1))-dien-3beta-ol + 6 Fe(III)-[cytochrome b5] + 4 H2O. Non-heme iron oxygenase involved in sterols biosynthesis by catalyzing the removal of the first methyl group at the C-4 position. 4,4-dimethyl-9-beta,19-cyclopropylsterols such as 24-methylenecycloartanol are the preferred substrates. The polypeptide is Methylsterol monooxygenase 1-3 (Arabidopsis thaliana (Mouse-ear cress)).